Here is a 1165-residue protein sequence, read N- to C-terminus: Leptin receptor (1165 aa).

Residues 1-21 (MICQKFCVVLLHWEFIYVITA) form the signal peptide. Residues 22–839 (FNLSYPITPW…QDDIEKHQSD (818 aa)) lie on the Extracellular side of the membrane. 6 N-linked (GlcNAc...) asparagine glycosylation sites follow: Asn23, Asn41, Asn56, Asn73, Asn81, and Asn98. Intrachain disulfides connect Cys37-Cys90, Cys89-Cys99, Cys131-Cys142, Cys186-Cys196, and Cys188-Cys193. N-linked (GlcNAc...) asparagine glycosylation is present at Asn187. N-linked (GlcNAc...) asparagine glycosylation is found at Asn206, Asn276, Asn347, and Asn397. The Fibronectin type-III 1 domain maps to 239 to 333 (PPLGLHMEIT…TPRVFTTQDV (95 aa)). Residues 331 to 429 (QDVIYFPPKI…HRYAELYVID (99 aa)) form the Ig-like domain. Intrachain disulfides connect Cys352/Cys412, Cys413/Cys418, Cys436/Cys447, Cys473/Cys528, and Cys488/Cys498. Residues 467–484 (HRSSLYCSDIPSIHPISE) are leptin-binding. 7 N-linked (GlcNAc...) asparagine glycosylation sites follow: Asn516, Asn624, Asn659, Asn688, Asn697, Asn728, and Asn750. 3 Fibronectin type-III domains span residues 539–634 (PPSS…TVVM), 639–732 (PMRG…LTFS), and 740–833 (IVQS…QDDI). A WSXWS motif motif is present at residues 622-626 (WSNWS). The chain crosses the membrane as a helical span at residues 840–862 (AGLYVIVPVIISSSILLLGTLLI). Residues 863 to 1165 (SHQRMKKLFW…MENKMCDLTV (303 aa)) are Cytoplasmic-facing. Residues 871 to 879 (FWEDVPNPK) carry the Box 1 motif motif. At Ser882 the chain carries Phosphoserine. Residues 893 to 898 (ETFEHL) form a required for JAK2 activation region. The segment at 898–906 (LFIKHTASV) is required for STAT3 phosphorylation. Position 986 is a phosphotyrosine; by JAK2 (Tyr986). At Tyr1079 the chain carries Phosphotyrosine. Phosphotyrosine; by JAK2 is present on Tyr1141.

This sequence belongs to the type I cytokine receptor family. Type 2 subfamily. Present as a mixture of monomers and dimers. The phosphorylated receptor binds a number of SH2 domain-containing proteins such as JAK2, STAT3, PTPN11, and SOCS3. Interaction with SOCS3 inhibits JAK/STAT signaling and MAPK cascade. Post-translationally, on ligand binding, phosphorylated on two conserved C-terminal tyrosine residues (isoform B only) by JAK2. Tyr-986 is required for complete binding and activation of PTPN11, ERK/FOS activation,for interaction with SOCS3 and SOCS3 mediated inhibition of leptin signaling. Phosphorylation on Tyr-1141 is required for STAT3 binding/activation. Phosphorylation of Tyr-1079 has a more accessory role. In terms of tissue distribution, isoform A is expressed in fetal liver and in hematopoietic tissues and choroid plexus. In adults highest expression in heart, liver, small intestine, prostate and ovary. Low level in lung and kidney. Isoform B is highly expressed in hypothalamus, but also in skeletal muscle. Detected in fundic and antral epithelial cells of the gastric mucosa. Isoform B and isoform A are expressed by NK cells (at protein level).

The protein resides in the cell membrane. It localises to the basolateral cell membrane. The protein localises to the secreted. Receptor for hormone LEP/leptin. On ligand binding, mediates LEP central and peripheral effects through the activation of different signaling pathways such as JAK2/STAT3 and MAPK cascade/FOS. In the hypothalamus, LEP acts as an appetite-regulating factor that induces a decrease in food intake and an increase in energy consumption by inducing anorexinogenic factors and suppressing orexigenic neuropeptides, also regulates bone mass and secretion of hypothalamo-pituitary-adrenal hormones. In the periphery, increases basal metabolism, influences reproductive function, regulates pancreatic beta-cell function and insulin secretion, is pro-angiogenic and affects innate and adaptive immunity. Control of energy homeostasis and melanocortin production (stimulation of POMC and full repression of AgRP transcription) is mediated by STAT3 signaling, whereas distinct signals regulate NPY and the control of fertility, growth and glucose homeostasis. Involved in the regulation of counter-regulatory response to hypoglycemia by inhibiting neurons of the parabrachial nucleus. Has a specific effect on T lymphocyte responses, differentially regulating the proliferation of naive and memory T -ells. Leptin increases Th1 and suppresses Th2 cytokine production. In terms of biological role, may transport LEP across the blood-brain barrier. Binds LEP and mediates LEP endocytosis. Does not induce phosphorylation of and activate STAT3. Its function is as follows. Antagonizes Isoform A and isoform B-mediated LEP binding and endocytosis. The sequence is that of Leptin receptor (LEPR) from Homo sapiens (Human).